Consider the following 122-residue polypeptide: Small ribosomal subunit protein uS13 (122 aa).

Residues 93-122 (RRGLPVRGQRTKTNARTRKGPKKTVAGKKK) are disordered.

It belongs to the universal ribosomal protein uS13 family. In terms of assembly, part of the 30S ribosomal subunit. Forms a loose heterodimer with protein S19. Forms two bridges to the 50S subunit in the 70S ribosome.

In terms of biological role, located at the top of the head of the 30S subunit, it contacts several helices of the 16S rRNA. In the 70S ribosome it contacts the 23S rRNA (bridge B1a) and protein L5 of the 50S subunit (bridge B1b), connecting the 2 subunits; these bridges are implicated in subunit movement. Contacts the tRNAs in the A and P-sites. In Micrococcus luteus (strain ATCC 4698 / DSM 20030 / JCM 1464 / CCM 169 / CCUG 5858 / IAM 1056 / NBRC 3333 / NCIMB 9278 / NCTC 2665 / VKM Ac-2230) (Micrococcus lysodeikticus), this protein is Small ribosomal subunit protein uS13.